A 152-amino-acid chain; its full sequence is Aspartate 1-decarboxylase (152 aa).

Residue Ser24 is the Schiff-base intermediate with substrate; via pyruvic acid of the active site. Ser24 carries the post-translational modification Pyruvic acid (Ser). Thr56 contributes to the substrate binding site. The active-site Proton donor is the Tyr57. 72-74 lines the substrate pocket; that stretch reads GAA.

The protein belongs to the PanD family. Heterooctamer of four alpha and four beta subunits. Requires pyruvate as cofactor. Is synthesized initially as an inactive proenzyme, which is activated by self-cleavage at a specific serine bond to produce a beta-subunit with a hydroxyl group at its C-terminus and an alpha-subunit with a pyruvoyl group at its N-terminus.

It localises to the cytoplasm. The catalysed reaction is L-aspartate + H(+) = beta-alanine + CO2. The protein operates within cofactor biosynthesis; (R)-pantothenate biosynthesis; beta-alanine from L-aspartate: step 1/1. Catalyzes the pyruvoyl-dependent decarboxylation of aspartate to produce beta-alanine. The protein is Aspartate 1-decarboxylase of Methylobacterium nodulans (strain LMG 21967 / CNCM I-2342 / ORS 2060).